Consider the following 631-residue polypeptide: VPS9 domain-containing protein 1 (631 aa).

Position 116 is a phosphoserine (Ser116). A coiled-coil region spans residues 187–221 (RQMMENLVIAKAREETLQRKMEERRLRLQEAANRR). The segment at 318 to 379 (PNPGSRRLRP…ASGLPDKDSS (62 aa)) is disordered. Residues 337 to 362 (PPEPSAAPRPQDSPPTPPLQPGPVGS) are compositionally biased toward pro residues. Residues 467 to 630 (RAREAALSRS…VELLPRGGLA (164 aa)) form the VPS9 domain.

Ubiquitous.

The protein is VPS9 domain-containing protein 1 (VPS9D1) of Homo sapiens (Human).